The following is a 133-amino-acid chain: MTTMDNTPQGELVLRTLAMPADTNANGDIFGGWLMSQMDIGGAILAKEIAHGRVVTVRVEGMTFLRPVAVGDVVCCYARCVKRGTTSISINIEVWVKKVASEPIGQRYKATEALFIYVAVDPDGKPRPLPVQG.

The HotDog ACOT-type domain maps to 8 to 123; it reads PQGELVLRTL…LFIYVAVDPD (116 aa).

Belongs to the acyl coenzyme A hydrolase family.

In terms of biological role, catalyzes the hydrolysis of the thioester bond in palmitoyl-CoA and malonyl-CoA. In Salmonella typhi, this protein is Acyl-CoA thioester hydrolase YciA (yciA).